The primary structure comprises 757 residues: Chloride channel protein C (757 aa).

Topologically, residues 1–96 are cytoplasmic; it reads MGSSLNKPLS…LHLKKTFGKW (96 aa). Transmembrane regions (helical) follow at residues 97-117, 141-161, 196-216, 253-273, 292-312, 337-357, 378-398, 462-482, 484-504, 506-526, and 535-555; these read IICL…KMVV, FLTF…MVIV, IVSL…GPMI, FISI…IGGV, TFFT…GIGS, LLCF…FVFL, FEAL…SFIF, LLVF…LWVA, GLFV…GQTI, MWFT…AMMA, and IVVI…IILA. CBS domains lie at 600-667 and 710-757; these read MSKN…TGEE and MNSS…NDLF.

The protein belongs to the chloride channel (TC 2.A.49) family.

The protein localises to the membrane. Functionally, voltage-gated chloride channel. Chloride channels may have several functions including the regulation of cell volume, membrane potential stabilization and signal transduction. This chain is Chloride channel protein C (clcC), found in Dictyostelium discoideum (Social amoeba).